The following is a 472-amino-acid chain: Zinc finger imprinted 3 (472 aa).

The region spanning 8–80 (VTFEDVTVNF…EEEVLGSGRA (73 aa)) is the KRAB domain. 11 consecutive C2H2-type zinc fingers follow at residues 167 to 189 (LKCN…LRRH), 195 to 217 (FECH…QKTH), 223 to 245 (YKCE…QKMH), 251 to 273 (YQCK…EKIH), 279 to 301 (YQCN…KKVH), 307 to 329 (FQCT…QRIH), 335 to 357 (YKCS…EKIH), 363 to 385 (YECD…KKIH), 391 to 413 (YECN…QKTH), 419 to 441 (YRCS…KKTH), and 447 to 470 (YGCS…KRIH).

This sequence belongs to the krueppel C2H2-type zinc-finger protein family.

The protein resides in the nucleus. In terms of biological role, may be involved in transcriptional regulation. This chain is Zinc finger imprinted 3 (ZIM3), found in Homo sapiens (Human).